The primary structure comprises 190 residues: Guanylate kinase (190 aa).

The Guanylate kinase-like domain occupies 3-185 (NYIFIISAPS…SLEQLCKYFE (183 aa)). 10 to 17 (APSGAGKS) lines the ATP pocket.

It belongs to the guanylate kinase family.

The protein resides in the cytoplasm. It catalyses the reaction GMP + ATP = GDP + ADP. Its function is as follows. Essential for recycling GMP and indirectly, cGMP. The chain is Guanylate kinase from Francisella tularensis subsp. holarctica (strain OSU18).